The following is a 513-amino-acid chain: Putative fucosyltransferase-like protein (513 aa).

Residues Met1 to Ser34 form a disordered region. Over Met1–Lys39 the chain is Cytoplasmic. A compositionally biased stretch (low complexity) spans Ser25 to Ser34. The helical; Signal-anchor for type II membrane protein transmembrane segment at Leu40–Gly60 threads the bilayer. Over Arg61–Val513 the chain is Lumenal. N-linked (GlcNAc...) asparagine glycosylation is found at Asn348 and Asn493.

It belongs to the glycosyltransferase 10 family.

It localises to the golgi apparatus. Its subcellular location is the golgi stack membrane. It participates in protein modification; protein glycosylation. May be involved in cell wall biosynthesis. May act as a fucosyltransferase. In Arabidopsis thaliana (Mouse-ear cress), this protein is Putative fucosyltransferase-like protein (FUT12).